The following is a 351-amino-acid chain: Ion-translocating oxidoreductase complex subunit D (351 aa).

4 consecutive transmembrane segments (helical) span residues 20–40 (IMLW…YFFG), 44–64 (LIQV…TLSL), 89–109 (LPPL…IIIA), and 123–143 (PAMI…TSWL). Thr187 bears the FMN phosphoryl threonine mark. Helical transmembrane passes span 215–235 (LSGI…LFLL), 244–264 (IPVS…IIAP), 267–287 (FAQP…FFIA), 301–321 (LIFG…GGYP), and 322–342 (DGVA…DYYT).

The protein belongs to the NqrB/RnfD family. In terms of assembly, the complex is composed of six subunits: RnfA, RnfB, RnfC, RnfD, RnfE and RnfG. It depends on FMN as a cofactor.

The protein localises to the cell inner membrane. Part of a membrane-bound complex that couples electron transfer with translocation of ions across the membrane. The polypeptide is Ion-translocating oxidoreductase complex subunit D (Pectobacterium atrosepticum (strain SCRI 1043 / ATCC BAA-672) (Erwinia carotovora subsp. atroseptica)).